The primary structure comprises 355 residues: MALRLLKLGATSASVRVVAAGAQRVRGIHSSVQCKLXYGMWRFLLGDKASKRLTEHSRVITVDGNICTGKGKLAKEIAEKLGFKHFPEAGIHYPDSITGDGKPLAADYNGNCSLEKFYDDPRSNDGNTYRLQSWLYSSRLLQYSDALEHLLTTGQGVVLERSIFSDFVFLDAMYNQGFIRKQCVDHYNEVKSVTICDYLPPHLVIYIDVPVPEVQRRIQKKGDPHEMKITSAYLQDIENAYKKTFLPEMSEKCEVLQYSAREAQDSKKVVEDIEYLKFDKGPWLKQDNRTLYHLRLLVQDKFEVLNYTSIPIFLPEVTIGAHQTDRVLHQFRELPGRKYSPGYNTEVGDKWIWLK.

The transit peptide at 1–35 (MALRLLKLGATSASVRVVAAGAQRVRGIHSSVQCK) directs the protein to the mitochondrion. S250 is modified (phosphoserine; by PINK1). K285 carries the N6-succinyllysine modification.

The protein belongs to the complex I NDUFA10 subunit family. Complex I is composed of 45 different subunits. This a component of the hydrophobic protein fraction. FAD is required as a cofactor. Post-translationally, phosphorylation at Ser-250 by PINK1 is required for the binding and/or reduction of the complex I substrate ubiquinone.

The protein resides in the mitochondrion matrix. Accessory subunit of the mitochondrial membrane respiratory chain NADH dehydrogenase (Complex I), that is believed not to be involved in catalysis. Complex I functions in the transfer of electrons from NADH to the respiratory chain. The immediate electron acceptor for the enzyme is believed to be ubiquinone. This Pongo pygmaeus (Bornean orangutan) protein is NADH dehydrogenase [ubiquinone] 1 alpha subcomplex subunit 10, mitochondrial (NDUFA10).